We begin with the raw amino-acid sequence, 486 residues long: Cardiolipin synthase A (486 aa).

Helical transmembrane passes span 3–23 and 38–58; these read TFYTVVSWLVILGYWLLIAGV and MAWLLIIYILPLVGIIAYLSF. 2 PLD phosphodiesterase domains span residues 219-246 and 399-426; these read MDLRQHRKMIMIDNYIAYTGSMNMVDPR and EGGLLHTKSVLVDGELSLVGTVNLDMRS. Active-site residues include histidine 224, lysine 226, aspartate 231, histidine 404, lysine 406, and aspartate 411.

The protein belongs to the phospholipase D family. Cardiolipin synthase subfamily. ClsA sub-subfamily.

The protein localises to the cell inner membrane. It catalyses the reaction 2 a 1,2-diacyl-sn-glycero-3-phospho-(1'-sn-glycerol) = a cardiolipin + glycerol. Functionally, catalyzes the reversible phosphatidyl group transfer from one phosphatidylglycerol molecule to another to form cardiolipin (CL) (diphosphatidylglycerol) and glycerol. This is Cardiolipin synthase A from Escherichia fergusonii (strain ATCC 35469 / DSM 13698 / CCUG 18766 / IAM 14443 / JCM 21226 / LMG 7866 / NBRC 102419 / NCTC 12128 / CDC 0568-73).